The primary structure comprises 140 residues: Small ribosomal subunit protein uS9 (140 aa).

It belongs to the universal ribosomal protein uS9 family.

The chain is Small ribosomal subunit protein uS9 from Desulfurococcus amylolyticus (strain DSM 18924 / JCM 16383 / VKM B-2413 / 1221n) (Desulfurococcus kamchatkensis).